The following is a 369-amino-acid chain: Anhydro-N-acetylmuramic acid kinase (369 aa).

An ATP-binding site is contributed by 12–19 (GTSLDGVD).

This sequence belongs to the anhydro-N-acetylmuramic acid kinase family.

It catalyses the reaction 1,6-anhydro-N-acetyl-beta-muramate + ATP + H2O = N-acetyl-D-muramate 6-phosphate + ADP + H(+). It functions in the pathway amino-sugar metabolism; 1,6-anhydro-N-acetylmuramate degradation. The protein operates within cell wall biogenesis; peptidoglycan recycling. Its function is as follows. Catalyzes the specific phosphorylation of 1,6-anhydro-N-acetylmuramic acid (anhMurNAc) with the simultaneous cleavage of the 1,6-anhydro ring, generating MurNAc-6-P. Is required for the utilization of anhMurNAc either imported from the medium or derived from its own cell wall murein, and thus plays a role in cell wall recycling. In Shigella boydii serotype 18 (strain CDC 3083-94 / BS512), this protein is Anhydro-N-acetylmuramic acid kinase.